A 129-amino-acid chain; its full sequence is MAKAPVRARKRVRKQVSDGVAHVHASFNNTIVTITDRQGNALGWATAGGSGFRGSRKSTPFAAQVAAERCAEAVKDYGIKNLEVMVKGPGPGRESTIRALNAAGFRITNITDVTPIPHNGCRPPKKRRV.

The protein belongs to the universal ribosomal protein uS11 family. As to quaternary structure, part of the 30S ribosomal subunit. Interacts with proteins S7 and S18. Binds to IF-3.

In terms of biological role, located on the platform of the 30S subunit, it bridges several disparate RNA helices of the 16S rRNA. Forms part of the Shine-Dalgarno cleft in the 70S ribosome. The chain is Small ribosomal subunit protein uS11 from Erwinia tasmaniensis (strain DSM 17950 / CFBP 7177 / CIP 109463 / NCPPB 4357 / Et1/99).